We begin with the raw amino-acid sequence, 259 residues long: O-antigen export system permease protein RfbA (259 aa).

The next 6 helical transmembrane spans lie at 33–53 (LGYLWSVANPLLFAMIYYFIF), 73–95 (FPWQWFASSATNSLFSFIANAQI), 111–131 (VMMEGLHFLCTIPVIVVFLFV), 142–162 (WGIPLIAIGQVIFTFGVSIIF), 176–196 (VSLGIMLMFYCTPILYASDMI), and 228–248 (EYISILYFTGIILTVVGLSIF). Residues 33-251 (LGYLWSVANP…VVGLSIFNKL (219 aa)) enclose the ABC transmembrane type-2 domain.

The protein belongs to the ABC-2 integral membrane protein family.

The protein resides in the cell inner membrane. Functionally, may form an ATP-driven O-antigen export apparatus, in association with RfbB. In Klebsiella pneumoniae, this protein is O-antigen export system permease protein RfbA (rfbA).